The following is a 317-amino-acid chain: Transaldolase (317 aa).

Catalysis depends on K126, which acts as the Schiff-base intermediate with substrate.

This sequence belongs to the transaldolase family. Type 1 subfamily. In terms of assembly, homodimer.

The protein localises to the cytoplasm. It catalyses the reaction D-sedoheptulose 7-phosphate + D-glyceraldehyde 3-phosphate = D-erythrose 4-phosphate + beta-D-fructose 6-phosphate. It participates in carbohydrate degradation; pentose phosphate pathway; D-glyceraldehyde 3-phosphate and beta-D-fructose 6-phosphate from D-ribose 5-phosphate and D-xylulose 5-phosphate (non-oxidative stage): step 2/3. Functionally, transaldolase is important for the balance of metabolites in the pentose-phosphate pathway. This chain is Transaldolase, found in Burkholderia thailandensis (strain ATCC 700388 / DSM 13276 / CCUG 48851 / CIP 106301 / E264).